The following is a 277-amino-acid chain: B3 domain-containing protein At3g19184 (277 aa).

The tract at residues 33–94 is disordered; the sequence is QSLRVSSSSS…LERRPRRSSR (62 aa). Residues 130-221 constitute a DNA-binding region (TF-B3); it reads FTKPMLQSHV…TFKVYIIRVN (92 aa). Acidic residues predominate over residues 224–250; it reads ANNDSDGNEVNDDDSDGNEEDRDNDNE. The disordered stretch occupies residues 224-277; that stretch reads ANNDSDGNEVNDDDSDGNEEDRDNDNESNEKQKETVSEGRQLRSSGKRKRRGRK. A compositionally biased stretch (basic and acidic residues) spans 251-264; that stretch reads SNEKQKETVSEGRQ. Residues 268–277 show a composition bias toward basic residues; that stretch reads SGKRKRRGRK.

The protein localises to the nucleus. This is B3 domain-containing protein At3g19184 from Arabidopsis thaliana (Mouse-ear cress).